We begin with the raw amino-acid sequence, 149 residues long: GATA transcription factor 15 (149 aa).

Basic and acidic residues predominate over residues 1–10 (MLDPTEKVID). 2 disordered regions span residues 1–41 (MLDP…NEKK) and 76–102 (RRTLISNRSEDKKKKSHNRNPKFGDSL). The segment at 37-91 (SNEKKSCAICGTSKTPLWRGGPAGPKSLCNACGIRNRKKRRTLISNRSEDKKKKS) adopts a GATA-type zinc-finger fold.

Belongs to the type IV zinc-finger family. Class B subfamily.

Its subcellular location is the nucleus. Functionally, transcriptional regulator that specifically binds 5'-GATA-3' or 5'-GAT-3' motifs within gene promoters. This is GATA transcription factor 15 (GATA15) from Arabidopsis thaliana (Mouse-ear cress).